Consider the following 262-residue polypeptide: Hydroxyethylthiazole kinase (262 aa).

M50 is a substrate binding site. Positions 125 and 171 each coordinate ATP. G198 serves as a coordination point for substrate.

Belongs to the Thz kinase family. The cofactor is Mg(2+).

The enzyme catalyses 5-(2-hydroxyethyl)-4-methylthiazole + ATP = 4-methyl-5-(2-phosphooxyethyl)-thiazole + ADP + H(+). Its pathway is cofactor biosynthesis; thiamine diphosphate biosynthesis; 4-methyl-5-(2-phosphoethyl)-thiazole from 5-(2-hydroxyethyl)-4-methylthiazole: step 1/1. In terms of biological role, catalyzes the phosphorylation of the hydroxyl group of 4-methyl-5-beta-hydroxyethylthiazole (THZ). In Shigella boydii serotype 18 (strain CDC 3083-94 / BS512), this protein is Hydroxyethylthiazole kinase.